The chain runs to 285 residues: RNase adapter protein RapZ (285 aa).

8 to 15 lines the ATP pocket; the sequence is GRSGSGKS. A GTP-binding site is contributed by 56–59; the sequence is DVRN. The interval 266-285 is RNA-binding; sequence RSRGKNVQSRHRTLEKRKPS.

Belongs to the RapZ-like family. RapZ subfamily. In terms of assembly, homotrimer.

Modulates the synthesis of GlmS, by affecting the processing and stability of the regulatory small RNA GlmZ. When glucosamine-6-phosphate (GlcN6P) concentrations are high in the cell, RapZ binds GlmZ and targets it to cleavage by RNase E. Consequently, GlmZ is inactivated and unable to activate GlmS synthesis. Under low GlcN6P concentrations, RapZ is sequestered and inactivated by an other regulatory small RNA, GlmY, preventing GlmZ degradation and leading to synthesis of GlmS. The sequence is that of RNase adapter protein RapZ from Pectobacterium atrosepticum (strain SCRI 1043 / ATCC BAA-672) (Erwinia carotovora subsp. atroseptica).